The following is a 463-amino-acid chain: UDP-N-acetylmuramoylalanine--D-glutamate ligase (463 aa).

An ATP-binding site is contributed by 116–122 (GTNGKTT).

It belongs to the MurCDEF family.

It localises to the cytoplasm. It catalyses the reaction UDP-N-acetyl-alpha-D-muramoyl-L-alanine + D-glutamate + ATP = UDP-N-acetyl-alpha-D-muramoyl-L-alanyl-D-glutamate + ADP + phosphate + H(+). It participates in cell wall biogenesis; peptidoglycan biosynthesis. Its function is as follows. Cell wall formation. Catalyzes the addition of glutamate to the nucleotide precursor UDP-N-acetylmuramoyl-L-alanine (UMA). This chain is UDP-N-acetylmuramoylalanine--D-glutamate ligase, found in Synechococcus elongatus (strain ATCC 33912 / PCC 7942 / FACHB-805) (Anacystis nidulans R2).